Here is a 617-residue protein sequence, read N- to C-terminus: Isopropyl malate synthase gloH (617 aa).

One can recognise a Pyruvate carboxyltransferase domain in the interval proline 47–leucine 325.

It belongs to the alpha-IPM synthase/homocitrate synthase family. LeuA type 2 subfamily.

It catalyses the reaction 3-methyl-2-oxobutanoate + acetyl-CoA + H2O = (2S)-2-isopropylmalate + CoA + H(+). It functions in the pathway mycotoxin biosynthesis. 2-isopropylmalate synthase; part of the gene cluster that mediates the biosynthesis of pneumocandins, lipohexapeptides of the echinocandin family that prevent fungal cell wall formation by non-competitive inhibition of beta-1,3-glucan synthase. The 10,12-dimethylmyristoyl side chain is synthesized by the reducing polyketide synthase gloL/GLPKS4. The thioesterase gloN/GLHYD exclusively interacts with gloL/GLPKS4 to maintain turnover of the polyketide side chain. The 10R,12S-dimethylmyristic acid is then transferred to the first thiolation domain of the nonribosomal peptide synthetase gloA/GLNRPS4 by the acyl-AMP ligase gloD/GLligase, followed by its acylation to L-ornithine to trigger elongation of the cyclic hexapeptide. L-ornithine, 4R-hydroxyl-L-proline (generated from L-proline by the dioxygenase gloF/GLOXY2), 3S-hydroxyl-L-homotyrosine (generated by gloG/GLHtyB, gloH/GLHtyA, gloI/GLHtyC, gloJ/GLHtyD and hydroxylated at C-3 by the dioxygenase gloM/GLOXY1), 3R-hydroxyl-L-glutamine (generated from L-glutamine probably by the dioxygenase gloE/GLOXY3) and 3S-hydroxyl-L-proline (generated from L-proline by the dioxygenase gloF/GLOXY2 to yield pneumocandin B0), or 3S-hydroxyl-4S-methyl-L-proline (generated from L-leucine by the dioxygenase gloC/GLOXY4 to yield pneumocandin A0) are sequentially added to the growing chain. The last C domain of gloA/GLNRPS4 is proposed to be responsible for cyclization by condensation to form the peptide bond between L-ornithine and 3S-hydroxyl-4S-methyl-L-proline (for pneumocandin A0) or 3S-hydroxyl-L-proline (for pneumocandin B0). Finally, the subsequent C-4 hydroxylation of 3S-hydroxyl-L-homotyrosine and L-ornithine dihydroxylation at C-4 and C-5 are performed by the cytochrome P450 monooxygenases gloP/GLP450-1 and gloO/GLP450-2, respectively. In Glarea lozoyensis (strain ATCC 20868 / MF5171), this protein is Isopropyl malate synthase gloH.